The following is a 463-amino-acid chain: Protein MRG3-like (463 aa).

The helical transmembrane segment at 54–74 threads the bilayer; it reads WVLSTGIVSFIAFNIWWVYWP. TPR repeat units follow at residues 84 to 118, 128 to 161, 358 to 389, and 409 to 442; these read KILRKGLHSEIKKEGANYQKSLEYYLEALEECKAE, TGIEIKIGEMYEKLHMYNDATALYGDMLKKFYNE, ELIRSRLQENQNSCLQYSADCYKSIISFANEN, and SLAHYGIGVINLHKGRLRASKKELKKAIRISEMI.

The protein belongs to the MGR3 family.

Its subcellular location is the membrane. This chain is Protein MRG3-like, found in Saccharomyces cerevisiae (strain ATCC 204508 / S288c) (Baker's yeast).